Here is a 261-residue protein sequence, read N- to C-terminus: Large ribosomal subunit protein uL2 (261 aa).

Residues 207 to 233 form a disordered region; it reads VEHPHGGGNHQHIGKASTVKRGTPPGR.

Belongs to the universal ribosomal protein uL2 family.

Its subcellular location is the cytoplasm. This is Large ribosomal subunit protein uL2 (RpL8) from Aedes albopictus (Asian tiger mosquito).